Consider the following 300-residue polypeptide: UDP-N-acetylenolpyruvoylglucosamine reductase (300 aa).

Positions 29 to 193 (TGGPADLLVF…LSATFKLRSG (165 aa)) constitute an FAD-binding PCMH-type domain. R172 is a catalytic residue. The active-site Proton donor is S222. The active site involves E292.

The protein belongs to the MurB family. The cofactor is FAD.

The protein resides in the cytoplasm. The catalysed reaction is UDP-N-acetyl-alpha-D-muramate + NADP(+) = UDP-N-acetyl-3-O-(1-carboxyvinyl)-alpha-D-glucosamine + NADPH + H(+). It participates in cell wall biogenesis; peptidoglycan biosynthesis. Cell wall formation. This is UDP-N-acetylenolpyruvoylglucosamine reductase from Pediococcus pentosaceus (strain ATCC 25745 / CCUG 21536 / LMG 10740 / 183-1w).